A 396-amino-acid polypeptide reads, in one-letter code: Tryptophan synthase beta chain (396 aa).

Lys-86 bears the N6-(pyridoxal phosphate)lysine mark.

Belongs to the TrpB family. As to quaternary structure, tetramer of two alpha and two beta chains. The cofactor is pyridoxal 5'-phosphate.

It carries out the reaction (1S,2R)-1-C-(indol-3-yl)glycerol 3-phosphate + L-serine = D-glyceraldehyde 3-phosphate + L-tryptophan + H2O. The protein operates within amino-acid biosynthesis; L-tryptophan biosynthesis; L-tryptophan from chorismate: step 5/5. The beta subunit is responsible for the synthesis of L-tryptophan from indole and L-serine. The chain is Tryptophan synthase beta chain from Blochmanniella pennsylvanica (strain BPEN).